A 568-amino-acid polypeptide reads, in one-letter code: Phosphoprotein (568 aa).

The disordered stretch occupies residues 1–24 (MDQDAFFFERDPEAEGEAPRKQES). The span at 7–24 (FFERDPEAEGEAPRKQES) shows a compositional bias: basic and acidic residues. An N0 binding region spans residues 33 to 41 (DVVLSYKPT). A disordered region spans residues 45–324 (EDRSWLHNII…SNEEGTSNTS (280 aa)). 3 stretches are compositionally biased toward basic and acidic residues: residues 56–105 (NPKE…HARI), 129–144 (GDERNTRIDEDSPNER), and 151–167 (PTDEDRKMAENSNKREE). The segment covering 179 to 216 (GSTSLSDDGEGRTNNNGRSMETSSTHSTRITDVITNPS) has biased composition (polar residues). Basic and acidic residues predominate over residues 239-253 (TRSERTQNSELHKST). Over residues 295-304 (TTNNANNNAK) the composition is skewed to low complexity. The segment at 344–411 (FELSRRASHQ…SSRDLHKRFS (68 aa)) is multimerization. Residues 387–416 (EENRTLLKQIQEEIDSSRDLHKRFSEYQKE) adopt a coiled-coil conformation. The segment at 412–445 (EYQKEQNSLMMANLSTLHIITDRGGKTGDPSDTT) is l protein binding. Disordered regions lie at residues 434–455 (RGGKTGDPSDTTRSPSVFTKGK) and 493–513 (PVLEEHNNEPQASNASRLIPS). Polar residues predominate over residues 441–450 (PSDTTRSPSV). The interaction with the nucleocapsid (N-RNA) stretch occupies residues 479–568 (DLIREDELRE…FEEDIDSLTN (90 aa)).

Belongs to the respirovirus P protein family. Homotetramer. Interacts (via multimerization domain) with polymerase L; this interaction forms the polymerase complex. Interacts (via N-terminus) with N0; this interaction allows P to chaperon N0 before encapsidation and form the N-P complex. Interacts (via C-terminus) with N-RNA template; this interaction positions the polymerase on the template.

Functionally, essential cofactor of the RNA polymerase L that plays a central role in the transcription and replication by forming the polymerase complex with RNA polymerase L and recruiting L to the genomic N-RNA template for RNA synthesis. Also plays a central role in the encapsidation of nascent RNA chains by forming the encapsidation complex with the nucleocapsid protein N (N-P complex). Acts as a chaperone for newly synthesized free N protein, so-called N0, allowing encapsidation of nascent RNA chains during replication. The nucleoprotein protein N prevents excessive phosphorylation of P, which leads to down-regulation of viral transcription/ replication. Participates, together with N, in the formation of viral factories (viroplasms), which are large inclusions in the host cytoplasm where replication takes place. Recruits host PI4KB and remodel the host endoplasmic reticulum membrane to form viral replication factories. This is Phosphoprotein (P/C) from Homo sapiens (Human).